A 71-amino-acid polypeptide reads, in one-letter code: DNA-directed RNA polymerase subunit epsilon (71 aa).

The protein belongs to the RNA polymerase subunit epsilon family. In terms of assembly, RNAP is composed of a core of 2 alpha, a beta and a beta' subunit. The core is associated with a delta subunit, and at least one of epsilon or omega. When a sigma factor is associated with the core the holoenzyme is formed, which can initiate transcription.

The enzyme catalyses RNA(n) + a ribonucleoside 5'-triphosphate = RNA(n+1) + diphosphate. Its function is as follows. A non-essential component of RNA polymerase (RNAP). This is DNA-directed RNA polymerase subunit epsilon from Anoxybacillus flavithermus (strain DSM 21510 / WK1).